An 884-amino-acid polypeptide reads, in one-letter code: Microsomal triglyceride transfer protein large subunit (884 aa).

The first 21 residues, 1–21 (MMPVAGLLLCVTAVLCTSALG), serve as a signal peptide directing secretion. One can recognise a Vitellogenin domain in the interval 26-660 (LDNGKLYRYS…QSNNALLHGL (635 aa)). C172 and C192 form a disulfide bridge. N348 is a glycosylation site (N-linked (GlcNAc...) asparagine). A disulfide bridge connects residues C438 and C443. N-linked (GlcNAc...) asparagine glycosylation occurs at N787.

Heterodimer; heterodimerizes with the protein disulfide isomerase. As to expression, highest expression in the proximal part of the anterior intestine. Lower expression in the distal part of the anterior intestine, in the posterior portion of the intestinal tube and liver. Very low expression levels in heart, brain, ovary, testis and kidney.

It localises to the endoplasmic reticulum. The protein resides in the golgi apparatus. It carries out the reaction a 1,2-diacyl-sn-glycero-3-phosphocholine(in) = a 1,2-diacyl-sn-glycero-3-phosphocholine(out). The catalysed reaction is a 1,2-diacyl-sn-glycero-3-phosphoethanolamine(in) = a 1,2-diacyl-sn-glycero-3-phosphoethanolamine(out). The enzyme catalyses a cholesterol ester(in) = a cholesterol ester(out). It catalyses the reaction a triacyl-sn-glycerol(in) = a triacyl-sn-glycerol(out). With respect to regulation, inhibited by naringenin. Functionally, catalyzes the transport of triglyceride between phospholipid surfaces. Catalyzes the transport of cholesteryl ester, and phospholipid between phospholipid surfaces. Required for the assembly and secretion of plasma lipoproteins that contain apolipoprotein B. Required for yolk lipid utilization and absorption of dietary lipids in larvae. The sequence is that of Microsomal triglyceride transfer protein large subunit from Danio rerio (Zebrafish).